The sequence spans 120 residues: Large ribosomal subunit protein uL22 (120 aa).

This sequence belongs to the universal ribosomal protein uL22 family. As to quaternary structure, part of the 50S ribosomal subunit.

This protein binds specifically to 23S rRNA; its binding is stimulated by other ribosomal proteins, e.g. L4, L17, and L20. It is important during the early stages of 50S assembly. It makes multiple contacts with different domains of the 23S rRNA in the assembled 50S subunit and ribosome. Functionally, the globular domain of the protein is located near the polypeptide exit tunnel on the outside of the subunit, while an extended beta-hairpin is found that lines the wall of the exit tunnel in the center of the 70S ribosome. The protein is Large ribosomal subunit protein uL22 of Corynebacterium urealyticum (strain ATCC 43042 / DSM 7109).